Reading from the N-terminus, the 371-residue chain is Flagellar P-ring protein (371 aa).

A signal peptide spans 1–28 (MPARPTPPAVPLALALAAALAAPAPAAA).

The protein belongs to the FlgI family. As to quaternary structure, the basal body constitutes a major portion of the flagellar organelle and consists of four rings (L,P,S, and M) mounted on a central rod.

The protein localises to the periplasm. It is found in the bacterial flagellum basal body. Assembles around the rod to form the L-ring and probably protects the motor/basal body from shearing forces during rotation. The polypeptide is Flagellar P-ring protein (Anaeromyxobacter dehalogenans (strain 2CP-C)).